The following is a 1567-amino-acid chain: ABC multidrug transporter MDR1 (1567 aa).

Positions 1 to 11 (MASQPPQPPSG) are enriched in pro residues. The disordered stretch occupies residues 1-37 (MASQPPQPPSGQPDTQYEEYQSEVITETTNRPTPAAD). Positions 22–32 (SEVITETTNRP) are enriched in polar residues. N-linked (GlcNAc...) asparagine glycosylation is found at Asn149, Asn157, and Asn356. One can recognise an ABC transporter 1 domain in the interval 167-432 (VQYQDTFLSP…FEEMGWYCPP (266 aa)). Transmembrane regions (helical) follow at residues 543 to 563 (STIATNISQIMMALIIGSLFF), 571 to 591 (GFFAKGSVIFFAILLNGLMSI), 636 to 656 (IPIKFLLALVFNIIIYFLGGL), 661 to 681 (AKFFIFFLFTFITILTMSAIF), 691 to 711 (IPQALALAGVMILALVIYTGF), and 798 to 818 (LGILLGFLAFFYFVYLVVSEL). Asn819, Asn895, and Asn912 each carry an N-linked (GlcNAc...) asparagine glycan. In terms of domain architecture, ABC transporter 2 spans 891–1134 (FTWRNVTYDI…LLNYFETHGA (244 aa)). 927-934 (GVSGAGKT) is a binding site for ATP. Residues 1172–1202 (ESRHVQQELDRIQSETSKRNEGHGQSAEKEP) form a disordered region. Residues 1231-1251 (IWGKLLLGLTSALFIGFSFFL) form a helical membrane-spanning segment. N-linked (GlcNAc...) asparagine glycosylation is present at Asn1253. 5 helical membrane passes run 1257 to 1277 (AGLQNSLFSIFMLTTIFSSLV), 1305 to 1325 (VFLLANIIVEIPYQILLGIIA), 1345 to 1365 (ILLLYCVQFFIFASTFAQMII), 1372 to 1392 (ETAGGIATTMFGLMVTFNGVL), and 1498 to 1518 (GIGWAYIVFNIFATVALYYLI).

This sequence belongs to the ABC transporter superfamily. ABCG family. PDR (TC 3.A.1.205) subfamily.

It localises to the cell membrane. It carries out the reaction voriconazole(in) + ATP + H2O = voriconazole(out) + ADP + phosphate + H(+). The enzyme catalyses fluconazole(in) + ATP + H2O = fluconazole(out) + ADP + phosphate + H(+). The catalysed reaction is (R)-miconazole(in) + ATP + H2O = (R)-miconazole(out) + ADP + phosphate + H(+). It catalyses the reaction (S)-miconazole(in) + ATP + H2O = (S)-miconazole(out) + ADP + phosphate + H(+). Functionally, pleiotropic ABC efflux transporter that may be involved in the modulation susceptibility to a wide range of unrelated cytotoxic compounds. The sequence is that of ABC multidrug transporter MDR1 from Trichophyton equinum (strain ATCC MYA-4606 / CBS 127.97) (Horse ringworm fungus).